Reading from the N-terminus, the 383-residue chain is uncharacterized protein (383 aa).

Helical transmembrane passes span 25–45 (LWVALCIVIGIALGKLLPAVA), 53–73 (IYNVSIPIAICLFFMMYPIMV), 103–123 (FTMVIFAQFFLGYLFAPLLTA), 139–159 (IAGCILLGIAPCTAMVLMWGY), 166–186 (GLTLVMVAVNSLAMLFLYAPL), 200–220 (WQTIVLSVLIYVGLPLAAGIY), 238–258 (FLHYLSPIAIVALLLTLILLF), 272–292 (IFLIAVPLFIQTNFIFLITYV), 309–329 (LIGASNHFEVAIATAVMLFGL), and 332–352 (GAALATVVGVLIEVPVMLMLV).

This sequence belongs to the arsenical resistance-3 (ACR3) (TC 2.A.59) family.

Its subcellular location is the cell membrane. This is an uncharacterized protein from Synechocystis sp. (strain ATCC 27184 / PCC 6803 / Kazusa).